Here is a 383-residue protein sequence, read N- to C-terminus: Microtubule-associated protein tau (383 aa).

Residues 1-27 (MAEPRQEFDVMEDHAGTYGLGDRKDQE) show a composition bias toward basic and acidic residues. The segment at 1 to 198 (MAEPRQEFDV…PVPMPDLKNV (198 aa)) is disordered. N-acetylalanine is present on Ala2. Phosphotyrosine is present on residues Tyr18 and Tyr29. Lys44 is covalently cross-linked (Glycyl lysine isopeptide (Lys-Gly) (interchain with G-Cter in ubiquitin)). Position 53 is a phosphothreonine (Thr53). Over residues 72–91 (KSKDGTGSDDKKAKGADGKT) the composition is skewed to basic and acidic residues. A Phosphothreonine modification is found at Thr95. Arg97 carries the omega-N-methylarginine modification. The residue at position 105 (Lys105) is an N6,N6-dimethyllysine; alternate. Residue Lys105 is modified to N6-acetyllysine; alternate. A phosphothreonine mark is found at Thr111, Thr117, and Thr123. Positions 116-128 (KTPPAPKTPPSSG) are enriched in pro residues. 3 positions are modified to phosphoserine: Ser127, Ser133, and Ser137. A compositionally biased stretch (low complexity) spans 129–156 (EPPKSGDRSGYSSPGSPGTPGSRSRTPS). Tyr139 is modified (phosphotyrosine). Phosphoserine is present on residues Ser140, Ser141, and Ser144. 2 positions are modified to phosphothreonine: Thr147 and Thr154. Position 156 is a phosphoserine (Ser156). Residue Thr159 is modified to Phosphothreonine. Lys167 is modified (N6-acetyllysine). Residue Thr173 is modified to Phosphothreonine. Phosphoserine is present on residues Ser177 and Ser179. Tau/MAP repeat units lie at residues 186–216 (QTAP…GGGK), 217–247 (VQII…GGGS), 248–278 (VQIV…GGGQ), and 279–310 (VEVK…GGGN). Residue Lys196 forms a Glycyl lysine isopeptide (Lys-Gly) (interchain with G-Cter in ubiquitin) linkage. N6-acetyllysine; alternate is present on Lys201. Position 201 is an N6-methyllysine; alternate (Lys201). A Glycyl lysine isopeptide (Lys-Gly) (interchain with G-Cter in ubiquitin); alternate cross-link involves residue Lys201. Ser204 is modified (phosphoserine). Lys209 participates in a covalent cross-link: Glycyl lysine isopeptide (Lys-Gly) (interchain with G-Cter in ubiquitin). Lys223 is subject to N6-acetyllysine; alternate. A Glycyl lysine isopeptide (Lys-Gly) (interchain with G-Cter in ubiquitin); alternate cross-link involves residue Lys223. 2 positions are modified to phosphoserine: Ser227 and Ser231. N6-acetyllysine is present on Lys232. Cys233 and Cys264 form a disulfide bridge. The residue at position 235 (Ser235) is a Phosphoserine. Lys240 carries the post-translational modification N6-acetyllysine; alternate. Lys240 participates in a covalent cross-link: Glycyl lysine isopeptide (Lys-Gly) (interchain with G-Cter in ubiquitin); alternate. Residue Ser247 is modified to Phosphoserine. Position 253 is an N6,N6-dimethyllysine; alternate (Lys253). Lys253, Lys259, and Lys263 each carry N6-acetyllysine; alternate. Glycyl lysine isopeptide (Lys-Gly) (interchain with G-Cter in ubiquitin); alternate cross-links involve residues Lys253, Lys259, and Lys263. Residue Ser266 is modified to Phosphoserine. N6-acetyllysine; alternate occurs at positions 273, 285, and 289. Glycyl lysine isopeptide (Lys-Gly) (interchain with G-Cter in ubiquitin); alternate cross-links involve residues Lys273, Lys285, and Lys289. An Omega-N-methylarginine modification is found at Arg291. At Ser294 the chain carries Phosphoserine. Lys295 participates in a covalent cross-link: Glycyl lysine isopeptide (Lys-Gly) (interchain with G-Cter in ubiquitin). Ser298 is modified (phosphoserine). Lys311 bears the N6-acetyllysine; alternate mark. Lys311 participates in a covalent cross-link: Glycyl lysine isopeptide (Lys-Gly) (interchain with G-Cter in ubiquitin); alternate. Residue Lys317 forms a Glycyl lysine isopeptide (Lys-Gly) (interchain with G-Cter in ubiquitin) linkage. At Lys327 the chain carries N6-acetyllysine; alternate. Residue Lys327 forms a Glycyl lysine isopeptide (Lys-Gly) (interchain with G-Cter in ubiquitin); alternate linkage. At Tyr336 the chain carries Phosphotyrosine. Ser338 and Ser342 each carry phosphoserine. Residues 340-359 (VVSGDTSPRHLSNVSSTGSI) are disordered. Over residues 343-358 (GDTSPRHLSNVSSTGS) the composition is skewed to polar residues. The residue at position 345 (Thr345) is a Phosphothreonine. Ser346, Ser351, Ser358, and Ser364 each carry phosphoserine. Position 369 is a phosphothreonine (Thr369).

In terms of assembly, interacts with MARK1, MARK2, MARK3 and MARK4. Interacts with SQSTM1 when polyubiquitinated. Interacts with PSMC2 through SQSTM1. Interacts with FKBP4. Binds to CSNK1D. Interacts with SGK1. Interacts with PIN1. Interacts with LRRK2. Interacts with LRP1, leading to endocytosis; this interaction is reduced in the presence of LRPAP1/RAP. In terms of processing, polyubiquitinated. Requires functional TRAF6 and may provoke SQSTM1-dependent degradation by the proteasome. Phosphorylation at various serine and threonine residues in S-P or T-P motifs by proline-directed protein kinases (PDPK1, CDK1, CDK5, GSK3, MAPK) (a few sites per protein in interphase, more in mitosis), and at serine residues in K-X-G-S motifs by MAP/microtubule affinity-regulating kinase (MARK1, MARK2, MARK3 or MARK4), causing detachment from microtubules, and their disassembly. Phosphorylation at Ser-204 by BRSK1 and BRSK2 in neurons affects ability to bind microtubules and plays a role in neuron polarization. Phosphorylated by PHK. Dephosphorylation at several serine and threonine residues by the serine/threonine phosphatase PPP5C. Expressed in neurons.

It localises to the cytoplasm. Its subcellular location is the cytosol. The protein localises to the cell membrane. It is found in the cytoskeleton. The protein resides in the cell projection. It localises to the axon. Its subcellular location is the dendrite. Its function is as follows. Promotes microtubule assembly and stability, and might be involved in the establishment and maintenance of neuronal polarity. The C-terminus binds axonal microtubules while the N-terminus binds neural plasma membrane components, suggesting that tau functions as a linker protein between both. Axonal polarity is predetermined by tau localization (in the neuronal cell) in the domain of the cell body defined by the centrosome. The polypeptide is Microtubule-associated protein tau (MAPT) (Papio hamadryas (Hamadryas baboon)).